The primary structure comprises 277 residues: MSLEDAFSDGPAFVPYLAAGDPDYESSLEYVEALERGGADVIELGLPFSEPIAEGPTIQNAVVRSLEGGMTPTRFFEFVEDLDVSVPLVCMTYYNLIYRYGDEPGPRPFVEKAAEVGIEGFVVPDLPAEEAGPLREACDEFGLDLVFIVAPTTRGERLDRIMEQVSGYVYVQARLGTTGAQSSVSDQTDSSLERLTDYDVPKAVGFGISDGDHAERIVASGADGIIVGSALVDIVAEGHENGDDAETVADRLETLARELEDGAVAGASQRPPHPERT.

Residues Glu43 and Glu54 each act as proton acceptor in the active site.

It belongs to the TrpA family. In terms of assembly, tetramer of two alpha and two beta chains.

The catalysed reaction is (1S,2R)-1-C-(indol-3-yl)glycerol 3-phosphate + L-serine = D-glyceraldehyde 3-phosphate + L-tryptophan + H2O. Its pathway is amino-acid biosynthesis; L-tryptophan biosynthesis; L-tryptophan from chorismate: step 5/5. Functionally, the alpha subunit is responsible for the aldol cleavage of indoleglycerol phosphate to indole and glyceraldehyde 3-phosphate. In Haloferax volcanii (strain ATCC 29605 / DSM 3757 / JCM 8879 / NBRC 14742 / NCIMB 2012 / VKM B-1768 / DS2) (Halobacterium volcanii), this protein is Tryptophan synthase alpha chain.